The chain runs to 384 residues: S-adenosylmethionine synthase (384 aa).

H15 is an ATP binding site. D17 provides a ligand contact to Mg(2+). Residue E43 coordinates K(+). L-methionine contacts are provided by E56 and Q99. Residues 99 to 109 form a flexible loop region; it reads QSSDINQGVDR. ATP is bound by residues 164–166, 230–231, D239, 245–246, A262, and K266; these read DAK, RF, and RK. L-methionine is bound at residue D239. Position 270 (K270) interacts with L-methionine.

This sequence belongs to the AdoMet synthase family. In terms of assembly, homotetramer; dimer of dimers. The cofactor is Mg(2+). Requires K(+) as cofactor.

It is found in the cytoplasm. It catalyses the reaction L-methionine + ATP + H2O = S-adenosyl-L-methionine + phosphate + diphosphate. Its pathway is amino-acid biosynthesis; S-adenosyl-L-methionine biosynthesis; S-adenosyl-L-methionine from L-methionine: step 1/1. Its function is as follows. Catalyzes the formation of S-adenosylmethionine (AdoMet) from methionine and ATP. The overall synthetic reaction is composed of two sequential steps, AdoMet formation and the subsequent tripolyphosphate hydrolysis which occurs prior to release of AdoMet from the enzyme. The chain is S-adenosylmethionine synthase from Pasteurella multocida (strain Pm70).